The following is a 441-amino-acid chain: Malate dehydrogenase [NADP], chloroplastic (441 aa).

The transit peptide at 1–51 (MAVAELSPSYKTQLKTCQQLSSSLSTRLSDHRKFSLRLLPRPVSVRGGIRC) directs the protein to the chloroplast. Cysteine 75 and cysteine 80 form a disulfide bridge. Residue 104-110 (GAAGMIS) participates in NADP(+) binding. Residues arginine 185 and arginine 191 each coordinate substrate. Asparagine 198 is a binding site for NADP(+). Glutamine 205 is an NAD(+) binding site. 222-224 (VGN) is an NADP(+) binding site. Residues asparagine 224 and arginine 255 each contribute to the substrate site. Catalysis depends on histidine 280, which acts as the Proton acceptor. A disulfide bridge links cysteine 416 with cysteine 428.

The protein belongs to the LDH/MDH superfamily. MDH type 2 family. Homodimer.

It localises to the plastid. Its subcellular location is the chloroplast. It carries out the reaction (S)-malate + NADP(+) = oxaloacetate + NADPH + H(+). Chloroplast NADP-MDH is activated upon illumination. In order to be enzymatically active, disulfide bridges on the protein must be reduced by thioredoxin which receives electrons from ferredoxin and the electron transport system of photosynthesis. The chloroplastic, NADP-dependent form is essential for the photosynthesis C4 cycle, which allows plants to circumvent the problem of photorespiration. In C4 plants, NADP-MDH activity acts to convert oxaloacetate to malate in chloroplasts of mesophyll cells for transport to the bundle sheath cells. The chain is Malate dehydrogenase [NADP], chloroplastic (MDH1) from Mesembryanthemum crystallinum (Common ice plant).